A 223-amino-acid chain; its full sequence is Translation initiation factor 6 (223 aa).

This sequence belongs to the eIF-6 family.

Its function is as follows. Binds to the 50S ribosomal subunit and prevents its association with the 30S ribosomal subunit to form the 70S initiation complex. This Sulfurisphaera tokodaii (strain DSM 16993 / JCM 10545 / NBRC 100140 / 7) (Sulfolobus tokodaii) protein is Translation initiation factor 6.